The primary structure comprises 423 residues: Protein CLP1 homolog (423 aa).

ATP-binding positions include Glu-16, Lys-57, and 119 to 124 (DVGKST).

It belongs to the Clp1 family. Clp1 subfamily.

It is found in the nucleus. In terms of biological role, required for endonucleolytic cleavage during polyadenylation-dependent pre-mRNA 3'-end formation. This is Protein CLP1 homolog (cbc) from Drosophila yakuba (Fruit fly).